A 179-amino-acid polypeptide reads, in one-letter code: Large ribosomal subunit protein uL5 (179 aa).

Belongs to the universal ribosomal protein uL5 family. As to quaternary structure, part of the 50S ribosomal subunit; part of the 5S rRNA/L5/L18/L25 subcomplex. Contacts the 5S rRNA and the P site tRNA. Forms a bridge to the 30S subunit in the 70S ribosome.

This is one of the proteins that bind and probably mediate the attachment of the 5S RNA into the large ribosomal subunit, where it forms part of the central protuberance. In the 70S ribosome it contacts protein S13 of the 30S subunit (bridge B1b), connecting the 2 subunits; this bridge is implicated in subunit movement. Contacts the P site tRNA; the 5S rRNA and some of its associated proteins might help stabilize positioning of ribosome-bound tRNAs. The chain is Large ribosomal subunit protein uL5 from Geobacillus sp. (strain WCH70).